The sequence spans 334 residues: Anthranilate phosphoribosyltransferase (334 aa).

5-phospho-alpha-D-ribose 1-diphosphate contacts are provided by residues glycine 79, 82–83, serine 87, 89–92, 107–115, and serine 119; these read GD, NIST, and KHGNRSISS. Residue glycine 79 coordinates anthranilate. Serine 91 serves as a coordination point for Mg(2+). Residue asparagine 110 participates in anthranilate binding. Arginine 165 provides a ligand contact to anthranilate. Positions 224 and 225 each coordinate Mg(2+).

Belongs to the anthranilate phosphoribosyltransferase family. In terms of assembly, homodimer. Mg(2+) serves as cofactor.

It catalyses the reaction N-(5-phospho-beta-D-ribosyl)anthranilate + diphosphate = 5-phospho-alpha-D-ribose 1-diphosphate + anthranilate. The protein operates within amino-acid biosynthesis; L-tryptophan biosynthesis; L-tryptophan from chorismate: step 2/5. Its function is as follows. Catalyzes the transfer of the phosphoribosyl group of 5-phosphorylribose-1-pyrophosphate (PRPP) to anthranilate to yield N-(5'-phosphoribosyl)-anthranilate (PRA). This is Anthranilate phosphoribosyltransferase from Streptococcus pneumoniae (strain 70585).